Consider the following 416-residue polypeptide: E3 ubiquitin-protein ligase RNFT1 (416 aa).

Over residues 27–45 the composition is skewed to polar residues; it reads QSSSGHTHHQPGSNDSPSV. 2 disordered regions span residues 27–50 and 63–116; these read QSSS…MSLP and GDVT…ADSR. The span at 77–86 shows a compositional bias: basic residues; sequence GARSSSRRVR. The next 6 membrane-spanning stretches (helical) occupy residues 146–166, 184–204, 214–234, 237–257, 265–287, and 302–322; these read LVVQ…TFLY, LQCL…YYTF, VFMN…VVGI, FIGK…PSFV, YWYM…PVWF, and WHFG…IIFG. The required for ubiquitin ligase activity and for protection against ER stress-induced cell death stretch occupies residues 349 to 400; sequence CSEVDGMCAICQAEFIKPIVLVCQHVFCEECISLWFNKEKTCPLCRTVISNQ. The RING-type zinc-finger motif lies at 356–394; the sequence is CAICQAEFIKPIVLVCQHVFCEECISLWFNKEKTCPLCR.

It localises to the endoplasmic reticulum membrane. It carries out the reaction S-ubiquitinyl-[E2 ubiquitin-conjugating enzyme]-L-cysteine + [acceptor protein]-L-lysine = [E2 ubiquitin-conjugating enzyme]-L-cysteine + N(6)-ubiquitinyl-[acceptor protein]-L-lysine.. It functions in the pathway protein modification; protein ubiquitination. E3 ubiquitin-protein ligase that acts in the endoplasmic reticulum (ER)-associated degradation (ERAD) pathway, which targets misfolded proteins that accumulate in the endoplasmic reticulum (ER) for ubiquitination and subsequent proteasome-mediated degradation. Protects cells from ER stress-induced apoptosis. This chain is E3 ubiquitin-protein ligase RNFT1 (rnft1), found in Xenopus tropicalis (Western clawed frog).